Reading from the N-terminus, the 974-residue chain is GATOR2 complex protein WDR59 (974 aa).

7 WD repeats span residues 57-98 (QSKW…GEVG), 103-143 (GHTR…KPTV), 146-185 (SAVA…TAVE), 189-229 (AHLS…KYLN), 232-276 (PCQV…TPVH), 278-318 (FVGH…RVDS), and 319-362 (QMQR…TASH). The interval 350–374 (HTEDTDHQHTASHGEEEALKEDPPR) is disordered. In terms of domain architecture, RWD spans 393–494 (QEFSLINVQI…RQLVSCLESF (102 aa)). S564 is subject to Phosphoserine. The stretch at 668 to 706 (LNVNDIQETCQKNAASALLVGRKDLVQVWSLATVATDLC) is one WD 8 repeat. A phosphoserine mark is found at S821, S822, and S830. Positions 831 to 852 (LTYSDPRERERDQHDKNKRLLD) are disordered. The span at 835 to 851 (DPRERERDQHDKNKRLL) shows a compositional bias: basic and acidic residues. Residues 901 to 920 (YCSHCRSEVRGTQCAICKGF) form a C4-type zinc finger. Positions 902, 905, 914, 917, 927, 938, 943, 946, 949, 960, 964, 966, and 968 each coordinate Zn(2+). The RING-type; atypical zinc-finger motif lies at 921–973 (TFQCAICHVAVRGSSNFCLTCGHGGHTSHMMEWFRTQEVCPTGCGCHCLLEST).

This sequence belongs to the WD repeat WDR59 family. Component of the GATOR2 subcomplex, composed of MIOS, SEC13, SEH1L, WDR24 and WDR59. The GATOR2 complex interacts with CASTOR1 and CASTOR2; the interaction is negatively regulated by arginine. The GATOR2 complex interacts with SESN1, SESN2 and SESN3; the interaction is negatively regulated by amino acids. Interacts with DDB1-CUL4A/B E3 ligase complexes.

It localises to the lysosome membrane. The GATOR2 complex is negatively regulated by the upstream amino acid sensors CASTOR1 and SESN2, which sequester the GATOR2 complex in absence of amino acids. In the presence of abundant amino acids, GATOR2 is released from CASTOR1 and SESN2 and activated. Its function is as follows. As a component of the GATOR2 complex, functions as an activator of the amino acid-sensing branch of the mTORC1 signaling pathway. The GATOR2 complex indirectly activates mTORC1 through the inhibition of the GATOR1 subcomplex. GATOR2 probably acts as an E3 ubiquitin-protein ligase toward GATOR1. In the presence of abundant amino acids, the GATOR2 complex mediates ubiquitination of the NPRL2 core component of the GATOR1 complex, leading to GATOR1 inactivation. In the absence of amino acids, GATOR2 is inhibited, activating the GATOR1 complex. The sequence is that of GATOR2 complex protein WDR59 from Homo sapiens (Human).